The primary structure comprises 448 residues: 4-hydroxybenzoate transporter PcaK (448 aa).

Residues M1–I30 lie on the Cytoplasmic side of the membrane. The helical transmembrane segment at V31–I51 threads the bilayer. The Periplasmic portion of the chain corresponds to A52–G67. The chain crosses the membrane as a helical span at residues P68 to A88. Over D89–K94 the chain is Cytoplasmic. Residues L95–T115 form a helical membrane-spanning segment. Topologically, residues N116 to Q119 are periplasmic. Residues L120 to T140 form a helical membrane-spanning segment. Residues L141–S152 lie on the Cytoplasmic side of the membrane. The chain crosses the membrane as a helical span at residues L153–S173. At A174–S184 the chain is on the periplasmic side. The chain crosses the membrane as a helical span at residues L185–P205. Over E206–Y261 the chain is Cytoplasmic. Residues S262–L282 traverse the membrane as a helical segment. Residues T283–A301 lie on the Periplasmic side of the membrane. A helical transmembrane segment spans residues F302–M322. The Cytoplasmic segment spans residues D323–K329. The chain crosses the membrane as a helical span at residues V330–G350. A topological domain (periplasmic) is located at residue Q351. A helical membrane pass occupies residues V352–A372. Residues M373–R398 are Cytoplasmic-facing. The chain crosses the membrane as a helical span at residues F399–E419. The Periplasmic segment spans residues Q420–V421. A helical transmembrane segment spans residues L422–V442. Over S443–G448 the chain is Cytoplasmic.

Belongs to the major facilitator superfamily. Aromatic acid:H(+) symporter (AAHS) (TC 2.A.1.15) family.

The protein resides in the cell inner membrane. Transports 4-hydroxybenzoate (4-HBA) and protocatechuate across the membrane. Driven by the proton motive force. Also functions as a chemoreceptor, which is required for chemotaxis to aromatic acids. The polypeptide is 4-hydroxybenzoate transporter PcaK (pcaK) (Pseudomonas aeruginosa (strain ATCC 15692 / DSM 22644 / CIP 104116 / JCM 14847 / LMG 12228 / 1C / PRS 101 / PAO1)).